Here is a 96-residue protein sequence, read N- to C-terminus: MTKLNSYETLYIVKPELTEDSLAKLIESYQGLLLERGAKNIITQNRGRRTLKYMIKKYKDAHYVQMNYEGNGEVIQLLERAMKINESIVRFLTTAI.

Belongs to the bacterial ribosomal protein bS6 family.

It is found in the plastid. The protein resides in the chloroplast. Binds together with bS18 to 16S ribosomal RNA. The polypeptide is Small ribosomal subunit protein bS6c (rps6) (Guillardia theta (Cryptophyte)).